The chain runs to 177 residues: Large ribosomal subunit protein uL6 (177 aa).

It belongs to the universal ribosomal protein uL6 family. As to quaternary structure, part of the 50S ribosomal subunit.

This protein binds to the 23S rRNA, and is important in its secondary structure. It is located near the subunit interface in the base of the L7/L12 stalk, and near the tRNA binding site of the peptidyltransferase center. The protein is Large ribosomal subunit protein uL6 of Polaromonas naphthalenivorans (strain CJ2).